The following is a 60-amino-acid chain: Photosystem II reaction center protein L (60 aa).

The helical transmembrane segment at 39 to 59 (SLYWGLLLIFVLAVLFSSYIF) threads the bilayer.

This sequence belongs to the PsbL family. PSII is composed of 1 copy each of membrane proteins PsbA, PsbB, PsbC, PsbD, PsbE, PsbF, PsbH, PsbI, PsbJ, PsbK, PsbL, PsbM, PsbT, PsbX, PsbY, PsbZ, Psb30/Ycf12, at least 3 peripheral proteins of the oxygen-evolving complex and a large number of cofactors. It forms dimeric complexes.

The protein localises to the plastid. It is found in the chloroplast thylakoid membrane. One of the components of the core complex of photosystem II (PSII). PSII is a light-driven water:plastoquinone oxidoreductase that uses light energy to abstract electrons from H(2)O, generating O(2) and a proton gradient subsequently used for ATP formation. It consists of a core antenna complex that captures photons, and an electron transfer chain that converts photonic excitation into a charge separation. This subunit is found at the monomer-monomer interface and is required for correct PSII assembly and/or dimerization. The sequence is that of Photosystem II reaction center protein L from Oedogonium cardiacum (Filamentous green alga).